The primary structure comprises 1582 residues: Alpha-2-macroglobulin (1582 aa).

The signal sequence occupies residues 1–15 (MICLAALAVAVPARA). Positions 1080–1083 (CAEQ) form a cross-link, isoglutamyl cysteine thioester (Cys-Gln).

Belongs to the protease inhibitor I39 (alpha-2-macroglobulin) family. Bacterial alpha-2-macroglobulin subfamily.

In terms of biological role, protects the bacterial cell from host peptidases. This chain is Alpha-2-macroglobulin, found in Ralstonia nicotianae (strain ATCC BAA-1114 / GMI1000) (Ralstonia solanacearum).